The primary structure comprises 228 residues: Aquaporin Z 2 (228 aa).

Transmembrane regions (helical) follow at residues 9–29 (FFGT…AAAF) and 34–54 (IGFT…AYAV). Positions 63–65 (NPA) match the NPA 1 motif. Transmembrane regions (helical) follow at residues 82–102 (VPYV…LYVI), 129–149 (LVSA…VILG), and 158–178 (GFAP…SIPV). An NPA 2 motif is present at residues 184 to 186 (NPA). A helical membrane pass occupies residues 204-224 (WLFWLAPIVGGAAGAVIWKLF).

The protein belongs to the MIP/aquaporin (TC 1.A.8) family. As to quaternary structure, homotetramer.

It is found in the cell inner membrane. It carries out the reaction H2O(in) = H2O(out). Its function is as follows. Channel that permits osmotically driven movement of water in both directions. It is involved in the osmoregulation and in the maintenance of cell turgor during volume expansion in rapidly growing cells. It mediates rapid entry or exit of water in response to abrupt changes in osmolarity. This Agrobacterium fabrum (strain C58 / ATCC 33970) (Agrobacterium tumefaciens (strain C58)) protein is Aquaporin Z 2.